The primary structure comprises 140 residues: Nucleoside diphosphate kinase (140 aa).

ATP contacts are provided by Lys-11, Phe-59, Arg-87, Thr-93, Arg-104, and Asn-114. The active-site Pros-phosphohistidine intermediate is His-117.

Belongs to the NDK family. Homotetramer. The cofactor is Mg(2+).

The protein localises to the cytoplasm. It catalyses the reaction a 2'-deoxyribonucleoside 5'-diphosphate + ATP = a 2'-deoxyribonucleoside 5'-triphosphate + ADP. The catalysed reaction is a ribonucleoside 5'-diphosphate + ATP = a ribonucleoside 5'-triphosphate + ADP. Its function is as follows. Major role in the synthesis of nucleoside triphosphates other than ATP. The ATP gamma phosphate is transferred to the NDP beta phosphate via a ping-pong mechanism, using a phosphorylated active-site intermediate. This Hyphomonas neptunium (strain ATCC 15444) protein is Nucleoside diphosphate kinase.